Here is a 438-residue protein sequence, read N- to C-terminus: Mannose-1-phosphate guanylyltransferase regulatory subunit alpha (438 aa).

A substrate-binding domain region spans residues 2-260; the sequence is LKAVILIGGP…PNWWSQLKTA (259 aa). GDP-alpha-D-mannose-binding residues include Glu87 and Gln256. A hexapeptide repeat domain region spans residues 282–438; it reads LANVGIKRGE…SRSFKNEIIL (157 aa). Positions 373–402 are C-loop; the sequence is TPSDPDPNKPFAKMENPPLFNNEGKLNPSI.

This sequence belongs to the transferase hexapeptide repeat family. Component of the GMPPA-GMPPB mannose-1-phosphate guanylyltransferase complex composed of 4 GMPPA subunits and 8 GMPPB subunits; the complex is organized into three layers, a central layer made up of 2 GMPPA dimers sandwiched between two layers each made up of 2 GMPPB dimers.

In terms of biological role, regulatory subunit of the GMPPA-GMPPB mannose-1-phosphate guanylyltransferase complex; reduces the catalytic activity of GMPPB when part of the complex. Mediates allosteric feedback inhibition of GMPPB catalytic activity upon binding GDP-alpha-D-mannose. Together with GMPPB regulates GDP-alpha-D-mannose levels. This is Mannose-1-phosphate guanylyltransferase regulatory subunit alpha from Drosophila melanogaster (Fruit fly).